The chain runs to 172 residues: Protein-export protein SecB (172 aa).

It belongs to the SecB family. Homotetramer, a dimer of dimers. One homotetramer interacts with 1 SecA dimer.

It is found in the cytoplasm. Functionally, one of the proteins required for the normal export of preproteins out of the cell cytoplasm. It is a molecular chaperone that binds to a subset of precursor proteins, maintaining them in a translocation-competent state. It also specifically binds to its receptor SecA. In Ralstonia pickettii (strain 12J), this protein is Protein-export protein SecB.